The following is a 193-amino-acid chain: MYHDLIRSELNEAADTLANFLKDDSNIDAIQRAAILLADSFKAGGKVLSCGNGGSHCDAMHFAEELTGRYRENRPGYPAIAISDVSHLSCVSNDFGYDYVFSRYVEAVGREGDVLLGISTSGNSGNIIKAIEAARAKGMKVITLTGKDGGKMAGSADIEIRVPHFGYADRIQEIHIKVIHILIQLIEKEMVKA.

The SIS domain occupies 37–193 (LADSFKAGGK…QLIEKEMVKA (157 aa)). 52–54 (NGG) contacts substrate. The Zn(2+) site is built by His-61 and Glu-65. Substrate is bound by residues Glu-65, 93-94 (ND), 119-121 (STS), Ser-124, and Gln-172. Zn(2+) is bound by residues Gln-172 and His-180.

This sequence belongs to the SIS family. GmhA subfamily. Homotetramer. Zn(2+) is required as a cofactor.

Its subcellular location is the cytoplasm. The enzyme catalyses 2 D-sedoheptulose 7-phosphate = D-glycero-alpha-D-manno-heptose 7-phosphate + D-glycero-beta-D-manno-heptose 7-phosphate. The protein operates within carbohydrate biosynthesis; D-glycero-D-manno-heptose 7-phosphate biosynthesis; D-glycero-alpha-D-manno-heptose 7-phosphate and D-glycero-beta-D-manno-heptose 7-phosphate from sedoheptulose 7-phosphate: step 1/1. Functionally, catalyzes the isomerization of sedoheptulose 7-phosphate in D-glycero-D-manno-heptose 7-phosphate. The chain is Phosphoheptose isomerase from Yersinia pseudotuberculosis serotype O:1b (strain IP 31758).